Reading from the N-terminus, the 127-residue chain is UPF0738 protein Bsph_1225 (127 aa).

It belongs to the UPF0738 family.

The chain is UPF0738 protein Bsph_1225 from Lysinibacillus sphaericus (strain C3-41).